We begin with the raw amino-acid sequence, 487 residues long: 7-deoxyloganetin glucosyltransferase (487 aa).

Residue histidine 25 is the Proton acceptor of the active site. An anthocyanidin is bound at residue histidine 25. Aspartate 129 serves as the catalytic Charge relay. 7 residues coordinate UDP-alpha-D-glucose: threonine 151, glutamine 366, histidine 381, tryptophan 384, asparagine 385, serine 386, and glutamate 389. An an anthocyanidin-binding site is contributed by alanine 404. The UDP-alpha-D-glucose site is built by glutamate 405 and glutamine 406.

Belongs to the UDP-glycosyltransferase family. Expressed in roots.

The catalysed reaction is 7-deoxyloganetin + UDP-alpha-D-glucose = 7-deoxyloganin + UDP + H(+). In terms of biological role, iridoid glucosyltransferase acting exclusively on 7-deoxyloganetin. No activity with 7-deoxyloganetic acid. The protein is 7-deoxyloganetin glucosyltransferase (UGT85A23) of Catharanthus roseus (Madagascar periwinkle).